Consider the following 154-residue polypeptide: Large ribosomal subunit protein uL22c (154 aa).

This sequence belongs to the universal ribosomal protein uL22 family. As to quaternary structure, part of the 50S ribosomal subunit.

It localises to the plastid. It is found in the chloroplast. This protein binds specifically to 23S rRNA. In terms of biological role, the globular domain of the protein is located near the polypeptide exit tunnel on the outside of the subunit, while an extended beta-hairpin is found that lines the wall of the exit tunnel in the center of the 70S ribosome. This chain is Large ribosomal subunit protein uL22c (rpl22), found in Platanus occidentalis (Sycamore).